A 359-amino-acid polypeptide reads, in one-letter code: Histidinol-phosphate aminotransferase (359 aa).

N6-(pyridoxal phosphate)lysine is present on K217.

The protein belongs to the class-II pyridoxal-phosphate-dependent aminotransferase family. Histidinol-phosphate aminotransferase subfamily. In terms of assembly, homodimer. It depends on pyridoxal 5'-phosphate as a cofactor.

The catalysed reaction is L-histidinol phosphate + 2-oxoglutarate = 3-(imidazol-4-yl)-2-oxopropyl phosphate + L-glutamate. Its pathway is amino-acid biosynthesis; L-histidine biosynthesis; L-histidine from 5-phospho-alpha-D-ribose 1-diphosphate: step 7/9. The polypeptide is Histidinol-phosphate aminotransferase (Salmonella newport (strain SL254)).